We begin with the raw amino-acid sequence, 106 residues long: 3-phenylpropionate/cinnamic acid dioxygenase ferredoxin subunit (106 aa).

Positions 4–99 constitute a Rieske domain; the sequence is IYACPVADVP…VHVEGGDIFI (96 aa). [2Fe-2S] cluster is bound by residues Cys42, His44, Cys62, and His65.

The protein belongs to the bacterial ring-hydroxylating dioxygenase ferredoxin component family. In terms of assembly, this dioxygenase system consists of four proteins: the two subunits of the hydroxylase component (HcaE and HcaF), a ferredoxin (HcaC) and a ferredoxin reductase (HcaD). Requires [2Fe-2S] cluster as cofactor.

Its pathway is aromatic compound metabolism; 3-phenylpropanoate degradation. Part of the multicomponent 3-phenylpropionate dioxygenase, that converts 3-phenylpropionic acid (PP) and cinnamic acid (CI) into 3-phenylpropionate-dihydrodiol (PP-dihydrodiol) and cinnamic acid-dihydrodiol (CI-dihydrodiol), respectively. This protein seems to be a 2Fe-2S ferredoxin. The sequence is that of 3-phenylpropionate/cinnamic acid dioxygenase ferredoxin subunit from Shigella flexneri serotype 5b (strain 8401).